Here is a 443-residue protein sequence, read N- to C-terminus: Protein AknT (443 aa).

The protein belongs to the cytochrome P450 family.

Its function is as follows. Involved in the biosynthesis of the anthracycline antitumor agent aclacinomycin A. AknT is required for the glycosylation of aklavinone aglycone by AknS to yield aclacinomycin T (rhodosaminyl-aklavinone). The sequence is that of Protein AknT from Streptomyces galilaeus.